A 36-amino-acid polypeptide reads, in one-letter code: Photosystem II reaction center protein Y (36 aa).

Residues 1-4 (MDTR) are Lumenal-facing. A helical transmembrane segment spans residues 5-23 (LLVIAAPVLVAASWALFNI). Over 24–36 (GRLAIQQIQRLSR) the chain is Stromal.

Belongs to the PsbY family. PSII is composed of 1 copy each of membrane proteins PsbA, PsbB, PsbC, PsbD, PsbE, PsbF, PsbH, PsbI, PsbJ, PsbK, PsbL, PsbM, PsbT, PsbX, PsbY, PsbZ, Psb30/Ycf12, at least 3 peripheral proteins of the oxygen-evolving complex and a large number of cofactors. It forms dimeric complexes.

It is found in the plastid. The protein resides in the chloroplast thylakoid membrane. In terms of biological role, loosely associated component of the core of photosystem II (PSII), it is not always seen in crystals. PSII is a light-driven water plastoquinone oxidoreductase, using light energy to abstract electrons from H(2)O, generating a proton gradient subsequently used for ATP formation. This is Photosystem II reaction center protein Y from Thalassiosira pseudonana (Marine diatom).